We begin with the raw amino-acid sequence, 239 residues long: 1-(5-phosphoribosyl)-5-[(5-phosphoribosylamino)methylideneamino] imidazole-4-carboxamide isomerase (239 aa).

Catalysis depends on D8, which acts as the Proton acceptor. The active-site Proton donor is D129.

Belongs to the HisA/HisF family.

It is found in the cytoplasm. It carries out the reaction 1-(5-phospho-beta-D-ribosyl)-5-[(5-phospho-beta-D-ribosylamino)methylideneamino]imidazole-4-carboxamide = 5-[(5-phospho-1-deoxy-D-ribulos-1-ylimino)methylamino]-1-(5-phospho-beta-D-ribosyl)imidazole-4-carboxamide. The protein operates within amino-acid biosynthesis; L-histidine biosynthesis; L-histidine from 5-phospho-alpha-D-ribose 1-diphosphate: step 4/9. This Bacillus cereus (strain Q1) protein is 1-(5-phosphoribosyl)-5-[(5-phosphoribosylamino)methylideneamino] imidazole-4-carboxamide isomerase.